A 551-amino-acid polypeptide reads, in one-letter code: Probable malate:quinone oxidoreductase (551 aa).

Residues 525–544 are compositionally biased toward low complexity; that stretch reads QTAAAAPQAQPQLKPQPDAK. The interval 525-551 is disordered; the sequence is QTAAAAPQAQPQLKPQPDAKPVADIAL.

It belongs to the MQO family. It depends on FAD as a cofactor.

The catalysed reaction is (S)-malate + a quinone = a quinol + oxaloacetate. The protein operates within carbohydrate metabolism; tricarboxylic acid cycle; oxaloacetate from (S)-malate (quinone route): step 1/1. This is Probable malate:quinone oxidoreductase from Enterobacter sp. (strain 638).